We begin with the raw amino-acid sequence, 102 residues long: Small ribosomal subunit protein eS24 (102 aa).

Belongs to the eukaryotic ribosomal protein eS24 family.

This is Small ribosomal subunit protein eS24 from Methanococcoides burtonii (strain DSM 6242 / NBRC 107633 / OCM 468 / ACE-M).